Reading from the N-terminus, the 1042-residue chain is MISYFLNQDFSRKKQGRMAASGPKSSGPRGFGRRTTVGSAQKRTQKKNGEKDSNATSTATNEVSGISKLPAAKVDVQKQSSVVLNERNVLDRSDIEDGSDRLDKKTTDDDDLLEQKLKLERENLRRKEIETLAAENLARGDRMFVYPVIVKPDEDIEVFLNRNLSTLNNEPDVLIMGAFNEWRWKSFTRRLEKTWIHEDWLSCLLHIPKEAYKMDFVFFNGQSVYDNNDSKDFCVEIKGGMDKVDFENFLLEEKLREQEKLAKEEAERERQKEEKRRIEAQKAAIEADRAQAKAETQKRRELLQPAIKKAVVSAENVWYIEPSDFKAEDTVKLYYNKRSGPLTNSKELWLHGGFNNWVDGLSIVVKLVNAELKDVDPKSGNWWFAEVVVPGGALVIDWVFADGPPKGAFLYDNNGYQDFHALVPQKLPEELYWLEEENMIFRKLQEDRRLKEEVMRAKMEKTARLKAETKERTLKKFLLSQKDVVYTEPLEIQAGNPVTVLYNPANTVLNGKPEVWFRGSFNRWTHRLGPLPPQKMEATDDESSHVKTTAKVPLDAYMMDFVFSEKEDGGIFDNKNGLDYHLPVVGGISKEPPLHIVHIAVEMAPIAKVGGLGDVVTSLSRAVQELNHNVDIVFPKYDCIKHNFVKDLQFNRSYHWGGTEIKVWHGKVEGLSVYFLDPQNGLFQRGCVYGCADDAGRFGFFCHAALEFLLQGGFHPDILHCHDWSSAPVSWLFKDHYTQYGLIKTRIVFTIHNLEFGANAIGKAMTFADKATTVSPTYAKEVAGNSVISAHLYKFHGIINGIDPDIWDPYNDNFIPVPYTSENVVEGKRAAKEELQNRLGLKSADFPVVGIITRLTHQKGIHLIKHAIWRTLERNGQVVLLGSAPDPRIQNDFVNLANQLHSSHGDRARLVLTYDEPLSHLIYAGADFILVPSIFEPCGLTQLIAMRYGAVPVVRKTGGLFDTVFDVDHDKERAQAQVLEPNGFSFDGADAPGVDYALNRAISAWYDGREWFNSLCKTVMEQDWSWNRPALEYLELYHSARK.

The N-terminal 44 residues, 1 to 44, are a transit peptide targeting the chloroplast; the sequence is MISYFLNQDFSRKKQGRMAASGPKSSGPRGFGRRTTVGSAQKRT. The interval 1–63 is disordered; the sequence is MISYFLNQDF…NATSTATNEV (63 aa). The segment covering 54-63 has biased composition (polar residues); that stretch reads NATSTATNEV. The stretch at 247–302 forms a coiled coil; the sequence is ENFLLEEKLREQEKLAKEEAERERQKEEKRRIEAQKAAIEADRAQAKAETQKRREL. An ADP-alpha-D-glucose-binding site is contributed by Lys-608.

It belongs to the glycosyltransferase 1 family. Bacterial/plant glycogen synthase subfamily. In terms of tissue distribution, expressed in leaves and flowers.

It is found in the plastid. The protein localises to the chloroplast. The protein resides in the amyloplast. The enzyme catalyses [(1-&gt;4)-alpha-D-glucosyl](n) + ADP-alpha-D-glucose = [(1-&gt;4)-alpha-D-glucosyl](n+1) + ADP + H(+). It functions in the pathway glycan biosynthesis; starch biosynthesis. Its function is as follows. Involved in the synthesis of glycan chains within amylopectin in leaves. May play a regulatory role in the control of starch accumulation in plastids. This chain is Starch synthase 3, chloroplastic/amyloplastic (SS3), found in Arabidopsis thaliana (Mouse-ear cress).